The primary structure comprises 2216 residues: Protein Ycf2 (2216 aa).

1567–1574 contacts ATP; it reads GSIGTGRS.

The protein belongs to the Ycf2 family.

The protein resides in the plastid stroma. In terms of biological role, probable ATPase of unknown function. Its presence in a non-photosynthetic plant (Epifagus virginiana) and experiments in tobacco indicate that it has an essential function which is probably not related to photosynthesis. The protein is Protein Ycf2 of Epifagus virginiana (Beechdrops).